A 233-amino-acid chain; its full sequence is Small ribosomal subunit protein uS3 (233 aa).

In terms of domain architecture, KH type-2 spans 39–107 (VRQFLASELT…PSQINIAEVR (69 aa)).

This sequence belongs to the universal ribosomal protein uS3 family. Part of the 30S ribosomal subunit. Forms a tight complex with proteins S10 and S14.

Binds the lower part of the 30S subunit head. Binds mRNA in the 70S ribosome, positioning it for translation. The sequence is that of Small ribosomal subunit protein uS3 from Baumannia cicadellinicola subsp. Homalodisca coagulata.